Reading from the N-terminus, the 469-residue chain is Sulfate adenylyltransferase subunit 1 (469 aa).

Residues 22–238 (KQLLRFITCG…LETIKIDEDR (217 aa)) enclose the tr-type G domain. The segment at 31-38 (GSVDDGKS) is G1. 31-38 (GSVDDGKS) is a GTP binding site. Positions 89-93 (GITID) are G2. The G3 stretch occupies residues 110 to 113 (DTPG). Residues 110 to 114 (DTPGH) and 165 to 168 (NKMD) each bind GTP. The interval 165–168 (NKMD) is G4. The interval 203-205 (SAL) is G5.

It belongs to the TRAFAC class translation factor GTPase superfamily. Classic translation factor GTPase family. CysN/NodQ subfamily. In terms of assembly, heterodimer composed of CysD, the smaller subunit, and CysN.

It catalyses the reaction sulfate + ATP + H(+) = adenosine 5'-phosphosulfate + diphosphate. It participates in sulfur metabolism; hydrogen sulfide biosynthesis; sulfite from sulfate: step 1/3. Its function is as follows. With CysD forms the ATP sulfurylase (ATPS) that catalyzes the adenylation of sulfate producing adenosine 5'-phosphosulfate (APS) and diphosphate, the first enzymatic step in sulfur assimilation pathway. APS synthesis involves the formation of a high-energy phosphoric-sulfuric acid anhydride bond driven by GTP hydrolysis by CysN coupled to ATP hydrolysis by CysD. The protein is Sulfate adenylyltransferase subunit 1 of Aliarcobacter butzleri (strain RM4018) (Arcobacter butzleri).